The chain runs to 359 residues: tRNA-specific 2-thiouridylase MnmA (359 aa).

ATP is bound by residues 9–16 (GISGGVDS) and methionine 35. Residues 95–97 (NPD) form an interaction with target base in tRNA region. Cysteine 100 functions as the Nucleophile in the catalytic mechanism. An intrachain disulfide couples cysteine 100 to cysteine 197. ATP is bound at residue glycine 124. Residues 147-149 (KDQ) are interaction with tRNA. Catalysis depends on cysteine 197, which acts as the Cysteine persulfide intermediate. Positions 309–310 (RY) are interaction with tRNA.

The protein belongs to the MnmA/TRMU family.

The protein localises to the cytoplasm. It catalyses the reaction S-sulfanyl-L-cysteinyl-[protein] + uridine(34) in tRNA + AH2 + ATP = 2-thiouridine(34) in tRNA + L-cysteinyl-[protein] + A + AMP + diphosphate + H(+). Its function is as follows. Catalyzes the 2-thiolation of uridine at the wobble position (U34) of tRNA, leading to the formation of s(2)U34. The sequence is that of tRNA-specific 2-thiouridylase MnmA from Francisella tularensis subsp. tularensis (strain FSC 198).